The following is a 133-amino-acid chain: ATP synthase epsilon chain (133 aa).

The protein belongs to the ATPase epsilon chain family. As to quaternary structure, F-type ATPases have 2 components, CF(1) - the catalytic core - and CF(0) - the membrane proton channel. CF(1) has five subunits: alpha(3), beta(3), gamma(1), delta(1), epsilon(1). CF(0) has three main subunits: a, b and c.

The protein resides in the cell membrane. Its function is as follows. Produces ATP from ADP in the presence of a proton gradient across the membrane. This is ATP synthase epsilon chain from Bacillus cereus (strain ATCC 14579 / DSM 31 / CCUG 7414 / JCM 2152 / NBRC 15305 / NCIMB 9373 / NCTC 2599 / NRRL B-3711).